Consider the following 358-residue polypeptide: tRNA-specific 2-thiouridylase MnmA (358 aa).

ATP is bound by residues 6 to 13 and M32; that span reads ALSGGVDS. C103 acts as the Nucleophile in catalysis. C103 and C201 are oxidised to a cystine. G127 provides a ligand contact to ATP. The interaction with tRNA stretch occupies residues 151 to 153; sequence KDQ. Catalysis depends on C201, which acts as the Cysteine persulfide intermediate.

This sequence belongs to the MnmA/TRMU family.

It localises to the cytoplasm. It catalyses the reaction S-sulfanyl-L-cysteinyl-[protein] + uridine(34) in tRNA + AH2 + ATP = 2-thiouridine(34) in tRNA + L-cysteinyl-[protein] + A + AMP + diphosphate + H(+). In terms of biological role, catalyzes the 2-thiolation of uridine at the wobble position (U34) of tRNA, leading to the formation of s(2)U34. The polypeptide is tRNA-specific 2-thiouridylase MnmA (Thermotoga maritima (strain ATCC 43589 / DSM 3109 / JCM 10099 / NBRC 100826 / MSB8)).